The primary structure comprises 264 residues: Thymidylate synthase (264 aa).

A dUMP-binding site is contributed by R21. Residue H51 coordinates (6R)-5,10-methylene-5,6,7,8-tetrahydrofolate. 126–127 is a dUMP binding site; that stretch reads RR. Residue C146 is the Nucleophile of the active site. Residues 166-169, N177, and 207-209 contribute to the dUMP site; these read RSAD and HIY. D169 is a binding site for (6R)-5,10-methylene-5,6,7,8-tetrahydrofolate. A263 serves as a coordination point for (6R)-5,10-methylene-5,6,7,8-tetrahydrofolate.

Belongs to the thymidylate synthase family. Bacterial-type ThyA subfamily. In terms of assembly, homodimer.

It localises to the cytoplasm. The catalysed reaction is dUMP + (6R)-5,10-methylene-5,6,7,8-tetrahydrofolate = 7,8-dihydrofolate + dTMP. It participates in pyrimidine metabolism; dTTP biosynthesis. Catalyzes the reductive methylation of 2'-deoxyuridine-5'-monophosphate (dUMP) to 2'-deoxythymidine-5'-monophosphate (dTMP) while utilizing 5,10-methylenetetrahydrofolate (mTHF) as the methyl donor and reductant in the reaction, yielding dihydrofolate (DHF) as a by-product. This enzymatic reaction provides an intracellular de novo source of dTMP, an essential precursor for DNA biosynthesis. The protein is Thymidylate synthase of Rhizobium meliloti (strain 1021) (Ensifer meliloti).